The primary structure comprises 357 residues: Probable cinnamyl alcohol dehydrogenase (357 aa).

Cys-47 serves as a coordination point for Zn(2+). An NADP(+)-binding site is contributed by Thr-49. His-69, Glu-70, Cys-100, Cys-103, Cys-106, Cys-114, and Cys-163 together coordinate Zn(2+). NADP(+) is bound by residues Thr-167, 188–193 (GLGGVG), 211–216 (SSSDKK), Thr-251, Gly-275, and 298–300 (SFI).

Belongs to the zinc-containing alcohol dehydrogenase family. In terms of assembly, homodimer. Requires Zn(2+) as cofactor.

It catalyses the reaction (E)-cinnamyl alcohol + NADP(+) = (E)-cinnamaldehyde + NADPH + H(+). The catalysed reaction is (E)-coniferol + NADP(+) = (E)-coniferaldehyde + NADPH + H(+). It carries out the reaction (E)-sinapyl alcohol + NADP(+) = (E)-sinapaldehyde + NADPH + H(+). The enzyme catalyses (E)-4-coumaroyl alcohol + NADP(+) = (E)-4-coumaraldehyde + NADPH + H(+). It catalyses the reaction (E)-caffeyl alcohol + NADP(+) = (E)-caffeyl aldehyde + NADPH + H(+). Its pathway is aromatic compound metabolism; phenylpropanoid biosynthesis. Its function is as follows. Involved in lignin biosynthesis. Catalyzes the final step specific for the production of lignin monomers. Catalyzes the NADPH-dependent reduction of coniferaldehyde, 5-hydroxyconiferaldehyde, sinapaldehyde, 4-coumaraldehyde and caffeyl aldehyde to their respective alcohols. The sequence is that of Probable cinnamyl alcohol dehydrogenase from Populus deltoides (Eastern poplar).